We begin with the raw amino-acid sequence, 139 residues long: Protein PsiE homolog (139 aa).

A run of 4 helical transmembrane segments spans residues 20-40, 60-80, 85-105, and 111-131; these read IVLCTALIALAIVLIIALVKI, AEQAVMFFLYFGFIGLIVQYF, HFPLRYFIYAGITAMLRLIIV, and VDTILFAGAILIMVIALCLVL.

This sequence belongs to the PsiE family.

Its subcellular location is the cell inner membrane. This Haemophilus influenzae (strain 86-028NP) protein is Protein PsiE homolog.